The following is a 375-amino-acid chain: Putative F-box only protein 11 (375 aa).

The F-box domain maps to 1–46 (MVSVNLPWELVEEILCRVPPQSLVKFRTVCKQWNSLFDDNKFVNDH).

The chain is Putative F-box only protein 11 (FBX11) from Arabidopsis thaliana (Mouse-ear cress).